A 324-amino-acid polypeptide reads, in one-letter code: NAD kinase (324 aa).

Catalysis depends on Asp89, which acts as the Proton acceptor. NAD(+) is bound by residues 89-90 (DG), Arg94, 163-164 (NE), Asp193, and 204-209 (TAYAFS).

It belongs to the NAD kinase family. A divalent metal cation is required as a cofactor.

It is found in the cytoplasm. The catalysed reaction is NAD(+) + ATP = ADP + NADP(+) + H(+). Functionally, involved in the regulation of the intracellular balance of NAD and NADP, and is a key enzyme in the biosynthesis of NADP. Catalyzes specifically the phosphorylation on 2'-hydroxyl of the adenosine moiety of NAD to yield NADP. This Nocardia farcinica (strain IFM 10152) protein is NAD kinase.